The chain runs to 237 residues: Flagellar brake protein YcgR (237 aa).

Positions 108-225 constitute a PilZ domain; the sequence is QRRRQFRVTT…MERKIQSAVF (118 aa).

It belongs to the YcgR family. In terms of assembly, monomer. Interacts with the flagellar basal bodies.

The protein resides in the bacterial flagellum basal body. Its function is as follows. Acts as a flagellar brake, regulating swimming and swarming in a bis-(3'-5') cyclic diguanylic acid (c-di-GMP)-dependent manner. Binds 1 c-di-GMP dimer per subunit. Increasing levels of c-di-GMP lead to decreased motility. The polypeptide is Flagellar brake protein YcgR (Serratia proteamaculans (strain 568)).